Consider the following 168-residue polypeptide: Large ribosomal subunit protein uL5 (168 aa).

This sequence belongs to the universal ribosomal protein uL5 family. As to quaternary structure, part of the 50S ribosomal subunit; contacts the 5S rRNA and probably tRNA. Forms a bridge to the 30S subunit in the 70S ribosome.

Its function is as follows. This is one of the proteins that bind and probably mediate the attachment of the 5S RNA into the large ribosomal subunit, where it forms part of the central protuberance. In the 70S ribosome it contacts protein S13 of the 30S subunit (bridge B1b), connecting the 2 subunits; this bridge is implicated in subunit movement. May contact the P site tRNA; the 5S rRNA and some of its associated proteins might help stabilize positioning of ribosome-bound tRNAs. The sequence is that of Large ribosomal subunit protein uL5 from Methanospirillum hungatei JF-1 (strain ATCC 27890 / DSM 864 / NBRC 100397 / JF-1).